The following is a 425-amino-acid chain: Polycomb protein esc (425 aa).

Positions 1–10 are enriched in basic and acidic residues; it reads MSSDKVKNGN. Positions 1 to 64 are disordered; that stretch reads MSSDKVKNGN…KPKSRAAYKY (64 aa). Residues 11–20 show a composition bias toward acidic residues; it reads EPEESEESCG. Serine 15 carries the post-translational modification Phosphoserine. Residues 21–42 are compositionally biased toward low complexity; the sequence is DESASYTTNSTTSRSKSPSSST. Over residues 43-60 the composition is skewed to basic residues; that stretch reads RSKRRGRRSTKSKPKSRA. WD repeat units lie at residues 71-114, 126-165, 168-208, 214-253, 284-321, 340-379, and 388-424; these read NHGA…GMQL, VFYT…AVGN, GHGQ…CIAI, GHRD…FHHK, IHRN…QSFE, ECEI…PEGA, and RSVA…QTTS.

It belongs to the WD repeat ESC family. As to quaternary structure, component of the polycomb repressive complex 2 (PRC2, also known as the Esc/E(Z) complex), composed of Caf1-55, esc, E(z), Su(z)12, and possibly pho. PRC2 associates with the accessory components Jarid2 and jing to form the PRC2 Jarid2-jing variant (PRC2.2). PRC2 may also associate with Pcl and HDAC1/Rpd3 during early embryogenesis. This complex is distinct from the PRC1 complex, which contains many other PcG proteins like Pc, Ph, Psc, Su(z)2. The two complexes however cooperate and interact together during the first 3 hours of development to establish PcG silencing. Interacts with corto in vitro. Widely expressed.

The protein localises to the nucleus. Functionally, polycomb group (PcG) protein. While PcG proteins are generally required to maintain the transcriptionally repressive state of homeotic genes throughout development, this protein is specifically required during the first 6 hours of embryogenesis to establish the repressed state. Component of the Esc/E(z) complex, which methylates 'Lys-9' and 'Lys-27' residues of histone H3, leading to transcriptional repression of the affected target gene. The Esc/E(z) complex is necessary but not sufficient for the repression of homeotic target genes, suggesting that the recruitment of the distinct PRC1 complex is also required. The polypeptide is Polycomb protein esc (esc) (Drosophila melanogaster (Fruit fly)).